Consider the following 473-residue polypeptide: Sucrose-6-phosphate hydrolase (473 aa).

Residues Leu-44–Asp-47, Gln-63, Tyr-106–Ser-107, Arg-167–Asp-168, and Glu-224 each bind substrate. Asp-47 is a catalytic residue.

The protein belongs to the glycosyl hydrolase 32 family.

Its subcellular location is the cytoplasm. The enzyme catalyses Hydrolysis of terminal non-reducing beta-D-fructofuranoside residues in beta-D-fructofuranosides.. It participates in glycan biosynthesis; sucrose metabolism. The protein is Sucrose-6-phosphate hydrolase (scrB) of Lactococcus lactis subsp. lactis (Streptococcus lactis).